A 648-amino-acid chain; its full sequence is p-hydroxybenzoic acid efflux pump subunit AaeB (648 aa).

A run of 11 helical transmembrane segments spans residues 11 to 31, 41 to 61, 65 to 87, 91 to 110, 125 to 145, 150 to 170, 369 to 389, 406 to 426, 430 to 450, 458 to 478, and 481 to 501; these read FACK…YFGL, AALV…SGAI, GWLR…MLLI, LLMI…LSSL, TALI…QLAL, EIVL…PRSV, LFWL…IAVV, FLMG…LILP, QSLV…GMAV, MGTL…GFPI, and FVDS…VLLV.

The protein belongs to the aromatic acid exporter ArAE (TC 2.A.85) family.

The protein localises to the cell inner membrane. In terms of biological role, forms an efflux pump with AaeA. Could function as a metabolic relief valve, allowing to eliminate certain compounds when they accumulate to high levels in the cell. The chain is p-hydroxybenzoic acid efflux pump subunit AaeB from Edwardsiella ictaluri (strain 93-146).